Consider the following 176-residue polypeptide: Probable DNA-directed RNA polymerase subunit delta (176 aa).

One can recognise an HTH HARE-type domain in the interval lysine 14–tryptophan 81. Residues leucine 114 to aspartate 176 form a disordered region. 2 stretches are compositionally biased toward acidic residues: residues glutamate 116–glutamate 145 and valine 153–aspartate 176.

This sequence belongs to the RpoE family. As to quaternary structure, RNAP is composed of a core of 2 alpha, a beta and a beta' subunits. The core is associated with a delta subunit and one of several sigma factors.

Functionally, participates in both the initiation and recycling phases of transcription. In the presence of the delta subunit, RNAP displays an increased specificity of transcription, a decreased affinity for nucleic acids, and an increased efficiency of RNA synthesis because of enhanced recycling. The chain is Probable DNA-directed RNA polymerase subunit delta from Staphylococcus aureus (strain JH1).